The chain runs to 901 residues: Protein translocase subunit SecA 1 (901 aa).

Residues glutamine 87, 105–109 (GEGKT), and aspartate 500 contribute to the ATP site. Residues 847–901 (LNHPESGSWGGEGEGPSSEGAPHLPFKRDGEKVGRNQACPCGSGKKYKQCCGKLS) form a disordered region. The Zn(2+) site is built by cysteine 885, cysteine 887, cysteine 896, and cysteine 897.

Belongs to the SecA family. Monomer and homodimer. Part of the essential Sec protein translocation apparatus which comprises SecA, SecYEG and auxiliary proteins SecDF-YajC and YidC. It depends on Zn(2+) as a cofactor.

The protein resides in the cell inner membrane. It is found in the cytoplasm. The enzyme catalyses ATP + H2O + cellular proteinSide 1 = ADP + phosphate + cellular proteinSide 2.. In terms of biological role, part of the Sec protein translocase complex. Interacts with the SecYEG preprotein conducting channel. Has a central role in coupling the hydrolysis of ATP to the transfer of proteins into and across the cell membrane, serving both as a receptor for the preprotein-SecB complex and as an ATP-driven molecular motor driving the stepwise translocation of polypeptide chains across the membrane. This Magnetococcus marinus (strain ATCC BAA-1437 / JCM 17883 / MC-1) protein is Protein translocase subunit SecA 1.